The sequence spans 404 residues: Probable tRNA sulfurtransferase (404 aa).

One can recognise a THUMP domain in the interval 60-165 (QPVAESLKQI…EEAAYISYET (106 aa)). Residues 183 to 184 (ML), 208 to 209 (HF), arginine 265, glycine 287, and glutamine 296 contribute to the ATP site.

It belongs to the ThiI family.

The protein localises to the cytoplasm. It carries out the reaction [ThiI sulfur-carrier protein]-S-sulfanyl-L-cysteine + a uridine in tRNA + 2 reduced [2Fe-2S]-[ferredoxin] + ATP + H(+) = [ThiI sulfur-carrier protein]-L-cysteine + a 4-thiouridine in tRNA + 2 oxidized [2Fe-2S]-[ferredoxin] + AMP + diphosphate. It catalyses the reaction [ThiS sulfur-carrier protein]-C-terminal Gly-Gly-AMP + S-sulfanyl-L-cysteinyl-[cysteine desulfurase] + AH2 = [ThiS sulfur-carrier protein]-C-terminal-Gly-aminoethanethioate + L-cysteinyl-[cysteine desulfurase] + A + AMP + 2 H(+). The protein operates within cofactor biosynthesis; thiamine diphosphate biosynthesis. Catalyzes the ATP-dependent transfer of a sulfur to tRNA to produce 4-thiouridine in position 8 of tRNAs, which functions as a near-UV photosensor. Also catalyzes the transfer of sulfur to the sulfur carrier protein ThiS, forming ThiS-thiocarboxylate. This is a step in the synthesis of thiazole, in the thiamine biosynthesis pathway. The sulfur is donated as persulfide by IscS. This Streptococcus gordonii (strain Challis / ATCC 35105 / BCRC 15272 / CH1 / DL1 / V288) protein is Probable tRNA sulfurtransferase.